Reading from the N-terminus, the 310-residue chain is tRNA uridine(34) hydroxylase (310 aa).

A Rhodanese domain is found at 127–225 (KNQNTIVIDT…YLDDIPKEKN (99 aa)). Residue Cys185 is the Cysteine persulfide intermediate of the active site.

It belongs to the TrhO family.

It carries out the reaction uridine(34) in tRNA + AH2 + O2 = 5-hydroxyuridine(34) in tRNA + A + H2O. Functionally, catalyzes oxygen-dependent 5-hydroxyuridine (ho5U) modification at position 34 in tRNAs. In Prochlorococcus marinus (strain MIT 9312), this protein is tRNA uridine(34) hydroxylase.